A 328-amino-acid polypeptide reads, in one-letter code: B3 domain-containing protein At5g60140 (328 aa).

A DNA-binding region (TF-B3) is located at residues 13–109; sequence SKFFKPYLPS…FFNFSIFDHE (97 aa). The tract at residues 145-221 is disordered; it reads LNSDDSDDSD…EDEDDLEDED (77 aa). Acidic residues-rich tracts occupy residues 148–182 and 190–221; these read DDSD…AEDG and GLED…EDED.

The protein resides in the nucleus. In Arabidopsis thaliana (Mouse-ear cress), this protein is B3 domain-containing protein At5g60140.